We begin with the raw amino-acid sequence, 357 residues long: MSKKILILPGDGIGHEIVAEAVKVLEHVNVRHTLNMRLSFDALGGAAYEKYGSPLADETLARAREADAVLLGAVGGPQWDTIDPALRPERGLLKIRAQLGLFANLRPALLYPQLADASTLKPEVVAGLDILIVRELTGGLYFGQPRGSRISKNGEREAFDTLPYCESEIRRILKVGFEMARLRGKKLCSVDKANVLASSQLWRTVAGEMAKDYPDVTLSHMYVDNAAMQLVRYPKQFDVIVTENMFGDILSDQASMLTGSIGMLPSASLDANNKGMYEPCHGSAPDIAGQGVANPLATILSVAMLLRYGMGYIKTADAIEYAVGVVLDSGLRTADIWSEGMTKVGTVAMGDAVVAAL.

Residue 76 to 89 (GPQWDTIDPALRPE) participates in NAD(+) binding. Residues arginine 96, arginine 106, arginine 134, and aspartate 224 each coordinate substrate. Positions 224, 248, and 252 each coordinate Mg(2+). 282 to 294 (GSAPDIAGQGVAN) is an NAD(+) binding site.

Belongs to the isocitrate and isopropylmalate dehydrogenases family. LeuB type 1 subfamily. In terms of assembly, homodimer. Requires Mg(2+) as cofactor. The cofactor is Mn(2+).

It is found in the cytoplasm. The enzyme catalyses (2R,3S)-3-isopropylmalate + NAD(+) = 4-methyl-2-oxopentanoate + CO2 + NADH. Its pathway is amino-acid biosynthesis; L-leucine biosynthesis; L-leucine from 3-methyl-2-oxobutanoate: step 3/4. Its function is as follows. Catalyzes the oxidation of 3-carboxy-2-hydroxy-4-methylpentanoate (3-isopropylmalate) to 3-carboxy-4-methyl-2-oxopentanoate. The product decarboxylates to 4-methyl-2 oxopentanoate. This chain is 3-isopropylmalate dehydrogenase, found in Xylella fastidiosa (strain Temecula1 / ATCC 700964).